Reading from the N-terminus, the 173-residue chain is DASH complex subunit SPC19 (173 aa).

It belongs to the DASH complex SPC19 family. As to quaternary structure, component of the DASH complex consisting of ASK1, DAD1, DAD2, DAD3, DAD4, DAM1, DUO1, HSK3, SPC19 and SPC34, with a stoichiometry of one copy of each subunit per complex. Multiple DASH complexes oligomerize to form a ring that encircles spindle microtubules and organizes the rod-like NDC80 complexes of the outer kinetochore. DASH complex oligomerization strengthens microtubule attachments. On cytoplasmic microtubules, DASH complexes appear to form patches instead of rings.

The protein localises to the nucleus. Its subcellular location is the cytoplasm. It is found in the cytoskeleton. The protein resides in the spindle. It localises to the chromosome. The protein localises to the centromere. Its subcellular location is the kinetochore. Its function is as follows. Component of the DASH complex that connects microtubules with kinetochores and couples microtubule depolymerisation to chromosome movement; it is involved in retrieving kinetochores to the spindle poles before their re-orientation on the spindle in early mitosis and allows microtubule depolymerization to pull chromosomes apart and resist detachment during anaphase. Kinetochores, consisting of a centromere-associated inner segment and a microtubule-contacting outer segment, play a crucial role in chromosome segregation by mediating the physical connection between centromeric DNA and microtubules. Kinetochores also serve as an input point for the spindle assembly checkpoint, which delays anaphase until all chromosomes have bioriented on the mitotic spindle. This chain is DASH complex subunit SPC19, found in Chaetomium thermophilum (strain DSM 1495 / CBS 144.50 / IMI 039719) (Thermochaetoides thermophila).